A 100-amino-acid chain; its full sequence is Large ribosomal subunit protein uL23 (100 aa).

This sequence belongs to the universal ribosomal protein uL23 family. Part of the 50S ribosomal subunit. Contacts protein L29, and trigger factor when it is bound to the ribosome.

One of the early assembly proteins it binds 23S rRNA. One of the proteins that surrounds the polypeptide exit tunnel on the outside of the ribosome. Forms the main docking site for trigger factor binding to the ribosome. This chain is Large ribosomal subunit protein uL23, found in Mycolicibacterium paratuberculosis (strain ATCC BAA-968 / K-10) (Mycobacterium paratuberculosis).